The primary structure comprises 76 residues: MKLLLLLLTVTLLLAQVTPVMKCWGKSGRCRTTCKESEVYYILCKTEAKCCVDPKYVPVKPKLTDTNTSLESTSAV.

The N-terminal stretch at 1 to 15 (MKLLLLLLTVTLLLA) is a signal peptide. Intrachain disulfides connect cysteine 23–cysteine 50, cysteine 30–cysteine 44, and cysteine 34–cysteine 51.

It belongs to the beta-defensin family. As to expression, abundant expression in the male reproductive tract only.

Its subcellular location is the secreted. In terms of biological role, has antibacterial activity. In Homo sapiens (Human), this protein is Beta-defensin 121 (DEFB121).